The primary structure comprises 308 residues: Putative T-box protein 30/42 (308 aa).

The segment at residues 11 to 192 (MSNEELWKER…KHSTFGNRSE (182 aa)) is a DNA-binding region (T-box). Residues 186-220 (TFGNRSEGGIKRKTSDAAGQLPSKRSSKKPVKKDV) form a disordered region.

It is found in the nucleus. Involved in the regulatory network to control embryonic patterning and morphogenesis. Implicated in negatively regulating vab-7 expression at the anterior of embryos. In Caenorhabditis elegans, this protein is Putative T-box protein 30/42 (tbx-30).